A 461-amino-acid polypeptide reads, in one-letter code: Thyroid hormone receptor beta (461 aa).

Residues 1–24 (MTPNSMTENRLPAWDKQKPHPDRG) form a disordered region. A modulating region spans residues 1–106 (MTPNSMTENR…IPSYLDKDEL (106 aa)). Residues 13–24 (AWDKQKPHPDRG) show a composition bias toward basic and acidic residues. 8 residues coordinate Zn(2+): Cys107, Cys110, Cys124, Cys127, Cys145, Cys151, Cys161, and Cys164. 2 NR C4-type zinc fingers span residues 107–127 (CVVC…CEGC) and 145–169 (CKYE…FKKC). A DNA-binding region (nuclear receptor) is located at residues 107-181 (CVVCGDKATG…VGMATDLVLD (75 aa)). The NR LBD domain occupies 217–461 (EEWELIKTVT…PPLFLEVFED (245 aa)). The interval 244-461 (KFLPEDIGQA…PPLFLEVFED (218 aa)) is interaction with NR2F6. 3,3',5-triiodo-L-thyronine-binding residues include Arg282, Asn331, and His435. Positions 282, 331, and 435 each coordinate L-thyroxine.

It belongs to the nuclear hormone receptor family. NR1 subfamily. As to quaternary structure, binds DNA as a dimer; homodimer and heterodimer with RXRA. Interacts with the coactivators NCOA1/SRC1, NCOA2/GRIP1, NCOA7 and MED1/TRAP220 in a ligand-inducible manner. Interacts with the corepressor NCOR1 in absence of ligand. Interacts with C1D. Interacts with NR2F6; the interaction impairs the binding of the THRB homodimer and THRB:RXRB heterodimer to T3 response elements. Interacts with PRMT2 and THRSP. Interacts with TACC1; this interaction is decreased in the presence of thyroid hormone T3.

It localises to the nucleus. Its function is as follows. Nuclear hormone receptor that can act as a repressor or activator of transcription. High affinity receptor for thyroid hormones, including triiodothyronine and thyroxine. The sequence is that of Thyroid hormone receptor beta (Thrb) from Rattus norvegicus (Rat).